The following is a 535-amino-acid chain: EH domain-containing protein 3 (535 aa).

Met1 is subject to N-acetylmethionine. Positions 55 to 286 (FDNKPMVLLV…DLFRDIQSLP (232 aa)) constitute a Dynamin-type G domain. The tract at residues 65–72 (GQYSTGKT) is G1 motif. Residue 65-72 (GQYSTGKT) participates in ATP binding. Residues 91 to 92 (EP) are G2 motif. Residues 153–156 (DTPG) are G3 motif. The stretch at 198-227 (DEFSEVIKALKNHEDKMRVVLNKADQIETQ) forms a coiled coil. Residues 219 to 222 (NKAD) form a G4 motif region. Residue Lys220 coordinates ATP. Residue Ile243 is a region of interest, G5 motif. Trp258 is an ATP binding site. Lys315 is covalently cross-linked (Glycyl lysine isopeptide (Lys-Gly) (interchain with G-Cter in SUMO)). Ser349 and Ser456 each carry phosphoserine. An EH domain is found at 444–532 (DKPMYDEIFY…AHLLPPSKRK (89 aa)). The region spanning 476-511 (LPNSVLGKIWKLADIDKDGMLDDEEFALANHLIKVK) is the EF-hand domain. Positions 489, 491, 493, 495, and 500 each coordinate Ca(2+). Residue Lys511 forms a Glycyl lysine isopeptide (Lys-Gly) (interchain with G-Cter in SUMO) linkage.

This sequence belongs to the TRAFAC class dynamin-like GTPase superfamily. Dynamin/Fzo/YdjA family. EHD subfamily. In terms of assembly, homooligomer. Heterooligomer with EHD1. Heterooligomer with EHD2 and EHD4; ATP-binding is required for heterooligomerization. Interacts with PACSIN1. Interacts with PACSIN2. Interacts (via EH domain) with MICALL1. Interacts (via EH domain) with RAB11FIP2. Interacts with ANK2. Interacts with CACNA1GG and CACNA1H. Strong expression seen in the kidney, brain and liver. In the kidney, expressed exclusively by glomerular endothelial cells; at protein level. Expressed in skeletal muscle neuromuscular junction perisynaptic region; at protein level.

The protein resides in the recycling endosome membrane. It is found in the cell membrane. It localises to the cell projection. The protein localises to the cilium membrane. Its subcellular location is the cytoplasmic vesicle. ATP- and membrane-binding protein that controls membrane reorganization/tubulation upon ATP hydrolysis. In vitro causes tubulation of endocytic membranes. Binding to phosphatidic acid induces its membrane tubulation activity. Plays a role in endocytic transport. Involved in early endosome to recycling endosome compartment (ERC), retrograde early endosome to Golgi, and endosome to plasma membrane (rapid recycling) protein transport. Involved in the regulation of Golgi maintenance and morphology. Involved in the recycling of internalized D1 dopamine receptor. Plays a role in cardiac protein trafficking probably implicating ANK2. Involved in the ventricular membrane targeting of SLC8A1 and CACNA1C and probably the atrial membrane localization of CACNA1GG and CACNA1H implicated in the regulation of atrial myocyte excitability and cardiac conduction. In conjunction with EHD4 may be involved in endocytic trafficking of KDR/VEGFR2 implicated in control of glomerular function. Involved in the rapid recycling of integrin beta-3 implicated in cell adhesion maintenance. Involved in the unidirectional retrograde dendritic transport of endocytosed BACE1 and in efficient sorting of BACE1 to axons implicating a function in neuronal APP processing. Plays a role in the formation of the ciliary vesicle, an early step in cilium biogenesis; possibly sharing redundant functions with Ehd1. The sequence is that of EH domain-containing protein 3 from Mus musculus (Mouse).